We begin with the raw amino-acid sequence, 203 residues long: Holliday junction branch migration complex subunit RuvA (203 aa).

Residues 1-64 form a domain I region; sequence MFAYFRGRLT…EDAFLLYGFS (64 aa). Residues 65-143 form a domain II region; that stretch reads SESERQLFRL…KMSPDGGKTI (79 aa). The interval 144 to 150 is flexible linker; that stretch reads ASGSGGN. The tract at residues 151-203 is domain III; the sequence is LALQIKDDALNALITLGFSKPAAQKAVTGILEGNPSLSVEEVVKSALVSIHNS.

This sequence belongs to the RuvA family. Homotetramer. Forms an RuvA(8)-RuvB(12)-Holliday junction (HJ) complex. HJ DNA is sandwiched between 2 RuvA tetramers; dsDNA enters through RuvA and exits via RuvB. An RuvB hexamer assembles on each DNA strand where it exits the tetramer. Each RuvB hexamer is contacted by two RuvA subunits (via domain III) on 2 adjacent RuvB subunits; this complex drives branch migration. In the full resolvosome a probable DNA-RuvA(4)-RuvB(12)-RuvC(2) complex forms which resolves the HJ.

It localises to the cytoplasm. Functionally, the RuvA-RuvB-RuvC complex processes Holliday junction (HJ) DNA during genetic recombination and DNA repair, while the RuvA-RuvB complex plays an important role in the rescue of blocked DNA replication forks via replication fork reversal (RFR). RuvA specifically binds to HJ cruciform DNA, conferring on it an open structure. The RuvB hexamer acts as an ATP-dependent pump, pulling dsDNA into and through the RuvAB complex. HJ branch migration allows RuvC to scan DNA until it finds its consensus sequence, where it cleaves and resolves the cruciform DNA. The protein is Holliday junction branch migration complex subunit RuvA of Chlorobium limicola (strain DSM 245 / NBRC 103803 / 6330).